Reading from the N-terminus, the 417-residue chain is NADH-quinone oxidoreductase subunit D (417 aa).

Belongs to the complex I 49 kDa subunit family. As to quaternary structure, NDH-1 is composed of 14 different subunits. Subunits NuoB, C, D, E, F, and G constitute the peripheral sector of the complex.

Its subcellular location is the cell inner membrane. It carries out the reaction a quinone + NADH + 5 H(+)(in) = a quinol + NAD(+) + 4 H(+)(out). Functionally, NDH-1 shuttles electrons from NADH, via FMN and iron-sulfur (Fe-S) centers, to quinones in the respiratory chain. The immediate electron acceptor for the enzyme in this species is believed to be ubiquinone. Couples the redox reaction to proton translocation (for every two electrons transferred, four hydrogen ions are translocated across the cytoplasmic membrane), and thus conserves the redox energy in a proton gradient. The polypeptide is NADH-quinone oxidoreductase subunit D (Burkholderia thailandensis (strain ATCC 700388 / DSM 13276 / CCUG 48851 / CIP 106301 / E264)).